We begin with the raw amino-acid sequence, 600 residues long: Aspartate--tRNA(Asp/Asn) ligase (600 aa).

Glutamate 174 provides a ligand contact to L-aspartate. An aspartate region spans residues 198-201 (QLFK). Arginine 220 contributes to the L-aspartate binding site. ATP-binding positions include 220–222 (RDE) and glutamine 229. Histidine 457 serves as a coordination point for L-aspartate. Residue glutamate 491 coordinates ATP. Arginine 498 serves as a coordination point for L-aspartate. Residue 543 to 546 (GLDR) coordinates ATP.

This sequence belongs to the class-II aminoacyl-tRNA synthetase family. Type 1 subfamily. As to quaternary structure, homodimer.

It localises to the cytoplasm. It carries out the reaction tRNA(Asx) + L-aspartate + ATP = L-aspartyl-tRNA(Asx) + AMP + diphosphate. In terms of biological role, aspartyl-tRNA synthetase with relaxed tRNA specificity since it is able to aspartylate not only its cognate tRNA(Asp) but also tRNA(Asn). Reaction proceeds in two steps: L-aspartate is first activated by ATP to form Asp-AMP and then transferred to the acceptor end of tRNA(Asp/Asn). This Burkholderia mallei (strain NCTC 10247) protein is Aspartate--tRNA(Asp/Asn) ligase.